Reading from the N-terminus, the 345-residue chain is Phosphoribosylformylglycinamidine cyclo-ligase (345 aa).

Belongs to the AIR synthase family.

The protein localises to the cytoplasm. It catalyses the reaction 2-formamido-N(1)-(5-O-phospho-beta-D-ribosyl)acetamidine + ATP = 5-amino-1-(5-phospho-beta-D-ribosyl)imidazole + ADP + phosphate + H(+). It participates in purine metabolism; IMP biosynthesis via de novo pathway; 5-amino-1-(5-phospho-D-ribosyl)imidazole from N(2)-formyl-N(1)-(5-phospho-D-ribosyl)glycinamide: step 2/2. The sequence is that of Phosphoribosylformylglycinamidine cyclo-ligase from Shewanella baltica (strain OS185).